Consider the following 303-residue polypeptide: Sulfate adenylyltransferase subunit 2 (303 aa).

The protein belongs to the PAPS reductase family. CysD subfamily. As to quaternary structure, heterodimer composed of CysD, the smaller subunit, and CysN.

The enzyme catalyses sulfate + ATP + H(+) = adenosine 5'-phosphosulfate + diphosphate. Its pathway is sulfur metabolism; hydrogen sulfide biosynthesis; sulfite from sulfate: step 1/3. Its function is as follows. With CysN forms the ATP sulfurylase (ATPS) that catalyzes the adenylation of sulfate producing adenosine 5'-phosphosulfate (APS) and diphosphate, the first enzymatic step in sulfur assimilation pathway. APS synthesis involves the formation of a high-energy phosphoric-sulfuric acid anhydride bond driven by GTP hydrolysis by CysN coupled to ATP hydrolysis by CysD. The sequence is that of Sulfate adenylyltransferase subunit 2 from Sulfurovum sp. (strain NBC37-1).